A 410-amino-acid polypeptide reads, in one-letter code: 2-hydroxy-5-methyl-1-naphthoate 7-hydroxylase (410 aa).

Cys-350 serves as a coordination point for heme.

The protein belongs to the cytochrome P450 family. The cofactor is heme.

The enzyme catalyses 2-hydroxy-5-methyl-1-naphthoate + 2 reduced [2Fe-2S]-[ferredoxin] + O2 + 2 H(+) = 2,7-dihydroxy-5-methyl-1-naphthoate + 2 oxidized [2Fe-2S]-[ferredoxin] + H2O. The protein operates within antibiotic biosynthesis. Functionally, involved in the biosynthesis of the naphthoic acid (NA) moiety in the chromophore of the enedyine antitumor antibiotic neocarzinostatin (NCS). Catalyzes the hydroxylation at C-7 position of 2-hydroxy-5-methyl-1-naphthoate to yield 2,7-dihydroxy-5-methyl-1-naphthoate. The chain is 2-hydroxy-5-methyl-1-naphthoate 7-hydroxylase from Streptomyces carzinostaticus.